The sequence spans 259 residues: Ribosomal RNA small subunit methyltransferase J (259 aa).

S-adenosyl-L-methionine-binding positions include 107-108 (RD), 123-124 (ER), 159-160 (SS), and Asp177.

Belongs to the methyltransferase superfamily. RsmJ family.

Its subcellular location is the cytoplasm. It catalyses the reaction guanosine(1516) in 16S rRNA + S-adenosyl-L-methionine = N(2)-methylguanosine(1516) in 16S rRNA + S-adenosyl-L-homocysteine + H(+). Its function is as follows. Specifically methylates the guanosine in position 1516 of 16S rRNA. This Shewanella loihica (strain ATCC BAA-1088 / PV-4) protein is Ribosomal RNA small subunit methyltransferase J.